We begin with the raw amino-acid sequence, 510 residues long: Cytochrome P450 monooxygenase macH (510 aa).

The chain crosses the membrane as a helical span at residues 7–29 (LPVSLWLIAAGTFAVYHAIRAVY). Cys454 is a binding site for heme.

This sequence belongs to the cytochrome P450 family. Heme serves as cofactor.

The protein resides in the membrane. It functions in the pathway secondary metabolite biosynthesis; terpenoid biosynthesis. Its function is as follows. Cytochrome P450 monooxygenase; part of the gene cluster that mediates the biosynthesis of macrophorins, isoprenoid epoxycyclohexenones containing cyclized drimane moieties. The first step of the pathway is the synthesis of 6-methylsalicylic acid (6-MSA) by the polyketide synthase macA. 6-MSA is then converted to m-cresol by the decarboxylase macB. The cytochrome P450 monooxygenase macC then catalyzes the oxidation of m-cresol to toluquinol. Epoxidation of toluquinol is then performed by the short chain dehydrogenase macD, with the help of macE, and a further prenylation by macG leads to 7-deacetoxyyanuthone A. The next step is the hydroxylation of C-22 of 7-deacetoxyyanuthone A by the cytochrome P450 monooxygenase macH to yield 22-deacetylyanuthone A. O-Mevalon transferase macI then attaches mevalon to the hydroxyl group of 22-deacetylyanuthone A to produce yanuthone E. The terpene cyclase macJ catalyzes the cyclization of 22-deacetylyanuthone A to macrophorin A. MacJ is also able to catalyze cyclization of yanuthone E and 7-deacetoxyyanuthone A to their corresponding macrophorins. The macJ products can be further modified by macH and macJ, as well as by the FAD-dependent monooxygenase macF, to produce additional macrophorins, including 4'-oxomacrophorin A, 4'-oxomacrophorin D and 4'-oxomacrophorin E. This Penicillium terrestre protein is Cytochrome P450 monooxygenase macH.